The primary structure comprises 842 residues: Protein P (842 aa).

The tract at residues 1-177 (MPLSYQHFRR…FCGSPYTWEQ (177 aa)) is terminal protein domain (TP). A spacer region spans residues 178 to 345 (DLQHGAFLDG…YCLSHLVNLL (168 aa)). The segment at 184–238 (FLDGPSRVGKEPFRQQSSRIPSRSPVGPSIQSKYQQSRLGLQSQKGPLARGQQGR) is disordered. Positions 197–208 (RQQSSRIPSRSP) are enriched in low complexity. The span at 212-228 (SIQSKYQQSRLGLQSQK) shows a compositional bias: polar residues. Positions 346–689 (QDWGPCTEHG…YMNLYPVARQ (344 aa)) are polymerase/reverse transcriptase domain (RT). In terms of domain architecture, Reverse transcriptase spans 356 to 599 (EHHIRIPRTP…YSLNFMGYVI (244 aa)). 3 residues coordinate Mg(2+): Asp428, Asp550, and Asp551.

This sequence belongs to the hepadnaviridae P protein family.

The catalysed reaction is DNA(n) + a 2'-deoxyribonucleoside 5'-triphosphate = DNA(n+1) + diphosphate. It carries out the reaction Endonucleolytic cleavage to 5'-phosphomonoester.. Its activity is regulated as follows. Activated by host HSP70 and HSP40 in vitro to be able to bind the epsilon loop of the pgRNA. Because deletion of the RNase H region renders the protein partly chaperone-independent, the chaperones may be needed indirectly to relieve occlusion of the RNA-binding site by this domain. Inhibited by several reverse-transcriptase inhibitors: Lamivudine, Adefovir and Entecavir. Multifunctional enzyme that converts the viral RNA genome into dsDNA in viral cytoplasmic capsids. This enzyme displays a DNA polymerase activity that can copy either DNA or RNA templates, and a ribonuclease H (RNase H) activity that cleaves the RNA strand of RNA-DNA heteroduplexes in a partially processive 3'- to 5'-endonucleasic mode. Neo-synthesized pregenomic RNA (pgRNA) are encapsidated together with the P protein, and reverse-transcribed inside the nucleocapsid. Initiation of reverse-transcription occurs first by binding the epsilon loop on the pgRNA genome, and is initiated by protein priming, thereby the 5'-end of (-)DNA is covalently linked to P protein. Partial (+)DNA is synthesized from the (-)DNA template and generates the relaxed circular DNA (RC-DNA) genome. After budding and infection, the RC-DNA migrates in the nucleus, and is converted into a plasmid-like covalently closed circular DNA (cccDNA). The activity of P protein does not seem to be necessary for cccDNA generation, and is presumably released from (+)DNA by host nuclear DNA repair machinery. This Hepatitis B virus genotype G (isolate IG29227/2000) (HBV-G) protein is Protein P.